Reading from the N-terminus, the 662-residue chain is U6 snRNA-specific terminal uridylyltransferase (662 aa).

Residues aspartate 183 and aspartate 185 each contribute to the Mg(2+) site. The PAP-associated domain maps to 384–437 (CKFFRELFKYYANFDFTNKAIYGKKAMQKKTLSSAHGGVEESPLMLMDPMDITH).

This sequence belongs to the DNA polymerase type-B-like family. Forms a complex composed of sart-3, terminal uridylyltransferase usip-1 and U6 snRNA; complex formation is mediated by usip-1 and sart-3 binding to U6 snRNA. It depends on Mg(2+) as a cofactor. Requires Mn(2+) as cofactor. As to expression, ubiquitously expressed.

It is found in the nucleus. The protein localises to the nucleoplasm. The enzyme catalyses RNA(n) + UTP = RNA(n)-3'-uridine ribonucleotide + diphosphate. Functionally, acts as a specific terminal uridylyltransferase for U6 snRNA. Responsible for the addition of UTP at the 3' end of U6 snRNA which stabilizes U6 snRNA. Does not have activity towards modified uridine containing 3'-monophosphorylation or 2'-O-methylation. This Caenorhabditis elegans protein is U6 snRNA-specific terminal uridylyltransferase.